The chain runs to 88 residues: UPF0250 protein Swoo_3713 (88 aa).

Belongs to the UPF0250 family.

The sequence is that of UPF0250 protein Swoo_3713 from Shewanella woodyi (strain ATCC 51908 / MS32).